The chain runs to 494 residues: Alpha-amylase-related protein (494 aa).

The first 20 residues, 1-20 (MIKFALALTLCLAGASLSLA), serve as a signal peptide directing secretion. Glutamine 21 carries the pyrrolidone carboxylic acid modification. Cysteine 48 and cysteine 104 are disulfide-bonded. Ca(2+)-binding residues include asparagine 118, glutamine 169, and aspartate 178. The cysteines at positions 157 and 171 are disulfide-linked. Arginine 206 is a chloride binding site. Aspartate 208 serves as the catalytic Nucleophile. Position 212 (histidine 212) interacts with Ca(2+). The Proton donor role is filled by glutamate 245. Chloride-binding residues include asparagine 308 and arginine 343. Intrachain disulfides connect cysteine 376–cysteine 382, cysteine 418–cysteine 441, and cysteine 448–cysteine 460.

Belongs to the glycosyl hydrolase 13 family. In terms of assembly, monomer. The cofactor is Ca(2+). Requires chloride as cofactor.

The protein resides in the secreted. It carries out the reaction Endohydrolysis of (1-&gt;4)-alpha-D-glucosidic linkages in polysaccharides containing three or more (1-&gt;4)-alpha-linked D-glucose units.. The sequence is that of Alpha-amylase-related protein (Amyrel) from Drosophila jambulina (Fruit fly).